A 122-amino-acid polypeptide reads, in one-letter code: Large ribosomal subunit protein bL12 (122 aa).

Belongs to the bacterial ribosomal protein bL12 family. As to quaternary structure, homodimer. Part of the ribosomal stalk of the 50S ribosomal subunit. Forms a multimeric L10(L12)X complex, where L10 forms an elongated spine to which 2 to 4 L12 dimers bind in a sequential fashion. Binds GTP-bound translation factors.

Forms part of the ribosomal stalk which helps the ribosome interact with GTP-bound translation factors. Is thus essential for accurate translation. This is Large ribosomal subunit protein bL12 from Buchnera aphidicola subsp. Acyrthosiphon pisum (strain Tuc7).